Here is a 211-residue protein sequence, read N- to C-terminus: tRNA (guanine-N(7)-)-methyltransferase (211 aa).

S-adenosyl-L-methionine contacts are provided by glutamate 44, aspartate 69, aspartate 96, and aspartate 118. Aspartate 118 is an active-site residue. Lysine 122 lines the substrate pocket. Residues 124-129 (RHEKRR) are interaction with RNA. Substrate contacts are provided by residues aspartate 154 and 191–194 (TEYE).

The protein belongs to the class I-like SAM-binding methyltransferase superfamily. TrmB family.

It catalyses the reaction guanosine(46) in tRNA + S-adenosyl-L-methionine = N(7)-methylguanosine(46) in tRNA + S-adenosyl-L-homocysteine. Its pathway is tRNA modification; N(7)-methylguanine-tRNA biosynthesis. In terms of biological role, catalyzes the formation of N(7)-methylguanine at position 46 (m7G46) in tRNA. The chain is tRNA (guanine-N(7)-)-methyltransferase from Streptococcus pneumoniae (strain JJA).